Here is a 261-residue protein sequence, read N- to C-terminus: MTEDARDLYLDLMKKVLTNLIYRDAPIQTFVYDGEPDADPRLLGRDWPSVAHTMVGLKRLDNLQYCVETVLADGVPGDLVETGVWRGGSSIFMRAVLRAHGDTARRVWVADSFEGMPEVGADSHAVDREMRLHEHNGVLAVPLEQVRANFERYGLLDDQVRFLPGWFKDTLPGAPTGRLAVIRLDGDLYESTTDALENLMPRLSPGGFVIIDDYAIDACRDAVHDYRGRYGISDPISEIDGTGVFWRHTAASARSLQPATV.

S-adenosyl-L-methionine-binding positions include T53–M54, E81–W85, D111–G115, F167, D185–G186, and S191. D185 contacts Mg(2+). Mg(2+) is bound by residues D212 and D213.

This sequence belongs to the methyltransferase TylF/MycF family. Mg(2+) is required as a cofactor.

The catalysed reaction is 8-demethyl-8-(2,3-di-O-methyl-alpha-L-rhamnosyl)-tetracenomycin C + S-adenosyl-L-methionine = 8-demethyl-8-(2,3,4-tri-O-methyl-alpha-L-rhamnosyl)-tetracenomycin C + S-adenosyl-L-homocysteine + H(+). Its pathway is antibiotic biosynthesis. Its function is as follows. O-methyltransferase involved in the biosynthesis of the permethylated L-rhamnose moiety of elloramycin, an antitumor polyketide. Mediates the methylation of the hydroxy groups at the 4'-position after the sugar moiety has been attached to the aglycon. The chain is 8-demethyl-8-(2,3-dimethoxy-alpha-L-rhamnosyl)-tetracenomycin-C 4'-O-methyltransferase from Streptomyces olivaceus.